Reading from the N-terminus, the 1383-residue chain is Spike glycoprotein (1383 aa).

The signal sequence occupies residues 1-25 (MRSLIYFWLLLPVLPTLSLPQDVTR). The S1 stretch occupies residues 26-734 (CQSTTNFRRF…TRELPGFFYH (709 aa)). Over 26-1324 (CQSTTNFRRF…NRVETYIKWP (1299 aa)) the chain is Virion surface. An interaction with host ANPEP region spans residues 617 to 745 (FQFTKGELIT…NDGSNCTEPV (129 aa)). Residues 735 to 1383 (SNDGSNCTEP…YEAFEKVHVQ (649 aa)) are S2. Residues 955–975 (IGGMALGGITAAAALPFSYAV) are fusion peptide. Residues 969–1088 (LPFSYAVQAR…QVDRLITGRL (120 aa)) form a heptad repeat 1 (HR1) region. Coiled-coil stretches lie at residues 1036-1080 (QEVV…DVQV) and 1272-1314 (TYLN…LEWL). Residues 1240 to 1336 (PDYIDVNKTL…VWLIIVIVLI (97 aa)) are heptad repeat 2 (HR2). The chain crosses the membrane as a helical span at residues 1325–1344 (WWVWLIIVIVLIFVVSLLVF). Topologically, residues 1345-1383 (CCISTGCCGCCGCCGACFSGCCRGPRLQPYEAFEKVHVQ) are intravirion. The KxHxx signature appears at 1379–1383 (KVHVQ).

Belongs to the alphacoronaviruses spike protein family. Homotrimer. During virus morphogenesis, found in a complex with M and HE proteins. Interacts with host ANPEP.

The protein resides in the virion membrane. It localises to the host endoplasmic reticulum-Golgi intermediate compartment membrane. Its function is as follows. S1 region attaches the virion to the cell membrane by interacting with host ANPEP/aminopeptidase N, initiating the infection. Binding to the receptor probably induces conformational changes in the S glycoprotein unmasking the fusion peptide of S2 region and activating membranes fusion. S2 region belongs to the class I viral fusion protein. Under the current model, the protein has at least 3 conformational states: pre-fusion native state, pre-hairpin intermediate state, and post-fusion hairpin state. During viral and target cell membrane fusion, the coiled coil regions (heptad repeats) regions assume a trimer-of-hairpins structure, positioning the fusion peptide in close proximity to the C-terminal region of the ectodomain. The formation of this structure appears to drive apposition and subsequent fusion of viral and target cell membranes. This Porcine epidemic diarrhea virus (strain CV777) (PEDV) protein is Spike glycoprotein.